Here is a 330-residue protein sequence, read N- to C-terminus: MAPEENAGTELLLQGFERRFLAVRTLRSFPWQSLEAKLRDSSDSELLRDILQKTVRHPVCVKHPPSVKYAWCFLSELIKKHEAVHTEPLDKLYEVLAETLMAKESTQGHRSYLLSSGGSVTLSKSTAIISHGTTGLVTWDAALYLAEWAIENPAAFINRTVLELGSGAGLTGLAICKMCRPRAYIFSDPHSRILEQLRGNVLLNGLSLEADITGNLDSPRVTVAQLDWDVAMVHQLSAFQPDVVIAADVLYCPEAIVSLVGVLQRLAACREHKRAPEVYVAFTVRNPETCQLFTTELGRDGIRWEAEAHHDQKLFPYGEHLEMAMLNLTL.

N-acetylmethionine is present on M1. S-adenosyl-L-methionine contacts are provided by residues W139, 165-167 (GSG), W228, and A247.

The protein belongs to the class I-like SAM-binding methyltransferase superfamily. EEF2KMT family. Interacts with EEF2KMT.

The chain is Putative protein N-methyltransferase FAM86B2 (FAM86B2) from Homo sapiens (Human).